A 364-amino-acid chain; its full sequence is tRNA-specific 2-thiouridylase MnmA (364 aa).

Residues 12–19 and Met38 contribute to the ATP site; that span reads GMSGGVDS. The interaction with target base in tRNA stretch occupies residues 98–100; the sequence is NPD. The active-site Nucleophile is the Cys103. Cys103 and Cys199 are disulfide-bonded. Gly127 provides a ligand contact to ATP. Residues 149–151 are interaction with tRNA; that stretch reads KDQ. Cys199 functions as the Cysteine persulfide intermediate in the catalytic mechanism. Positions 307-308 are interaction with tRNA; that stretch reads RY.

It belongs to the MnmA/TRMU family.

It localises to the cytoplasm. It carries out the reaction S-sulfanyl-L-cysteinyl-[protein] + uridine(34) in tRNA + AH2 + ATP = 2-thiouridine(34) in tRNA + L-cysteinyl-[protein] + A + AMP + diphosphate + H(+). Catalyzes the 2-thiolation of uridine at the wobble position (U34) of tRNA, leading to the formation of s(2)U34. The chain is tRNA-specific 2-thiouridylase MnmA from Shouchella clausii (strain KSM-K16) (Alkalihalobacillus clausii).